A 384-amino-acid chain; its full sequence is Succinyl-diaminopimelate desuccinylase (384 aa).

His71 contacts Zn(2+). Asp73 is an active-site residue. Residue Asp104 participates in Zn(2+) binding. The active-site Proton acceptor is Glu139. Zn(2+) is bound by residues Glu140, Glu168, and His357.

The protein belongs to the peptidase M20A family. DapE subfamily. Homodimer. It depends on Zn(2+) as a cofactor. Co(2+) is required as a cofactor.

It catalyses the reaction N-succinyl-(2S,6S)-2,6-diaminopimelate + H2O = (2S,6S)-2,6-diaminopimelate + succinate. It participates in amino-acid biosynthesis; L-lysine biosynthesis via DAP pathway; LL-2,6-diaminopimelate from (S)-tetrahydrodipicolinate (succinylase route): step 3/3. Functionally, catalyzes the hydrolysis of N-succinyl-L,L-diaminopimelic acid (SDAP), forming succinate and LL-2,6-diaminopimelate (DAP), an intermediate involved in the bacterial biosynthesis of lysine and meso-diaminopimelic acid, an essential component of bacterial cell walls. The chain is Succinyl-diaminopimelate desuccinylase from Bradyrhizobium sp. (strain ORS 278).